The primary structure comprises 31 residues: Photosystem II reaction center protein T (31 aa).

The helical transmembrane segment at Ser3 to Phe23 threads the bilayer.

Belongs to the PsbT family. In terms of assembly, PSII is composed of 1 copy each of membrane proteins PsbA, PsbB, PsbC, PsbD, PsbE, PsbF, PsbH, PsbI, PsbJ, PsbK, PsbL, PsbM, PsbT, PsbX, PsbY, PsbZ, Psb30/Ycf12, peripheral proteins PsbO, CyanoQ (PsbQ), PsbU, PsbV and a large number of cofactors. It forms dimeric complexes.

The protein resides in the cellular thylakoid membrane. Its function is as follows. Found at the monomer-monomer interface of the photosystem II (PS II) dimer, plays a role in assembly and dimerization of PSII. PSII is a light-driven water plastoquinone oxidoreductase, using light energy to abstract electrons from H(2)O, generating a proton gradient subsequently used for ATP formation. This is Photosystem II reaction center protein T from Synechococcus sp. (strain CC9902).